The sequence spans 110 residues: Iron-sulfur cluster assembly protein CyaY (110 aa).

It belongs to the frataxin family.

Functionally, involved in iron-sulfur (Fe-S) cluster assembly. May act as a regulator of Fe-S biogenesis. The chain is Iron-sulfur cluster assembly protein CyaY from Pseudomonas fluorescens (strain ATCC BAA-477 / NRRL B-23932 / Pf-5).